The sequence spans 200 residues: Recombination protein RecR (200 aa).

The C4-type zinc-finger motif lies at 57–72; that stretch reads CSQCRDFTEEDTCNIC. In terms of domain architecture, Toprim spans 81–176; it reads GLLCVVEMPA…KVSRIAHGIP (96 aa).

The protein belongs to the RecR family.

In terms of biological role, may play a role in DNA repair. It seems to be involved in an RecBC-independent recombinational process of DNA repair. It may act with RecF and RecO. The sequence is that of Recombination protein RecR from Haemophilus influenzae (strain 86-028NP).